Here is a 497-residue protein sequence, read N- to C-terminus: Serine hydroxymethyltransferase (497 aa).

(6S)-5,6,7,8-tetrahydrofolate contacts are provided by residues leucine 176 and 180–182; that span reads GHL. Residue lysine 289 is modified to N6-(pyridoxal phosphate)lysine.

It belongs to the SHMT family. Homodimer. The cofactor is pyridoxal 5'-phosphate.

Its subcellular location is the cytoplasm. It catalyses the reaction (6R)-5,10-methylene-5,6,7,8-tetrahydrofolate + glycine + H2O = (6S)-5,6,7,8-tetrahydrofolate + L-serine. The protein operates within one-carbon metabolism; tetrahydrofolate interconversion. It functions in the pathway amino-acid biosynthesis; glycine biosynthesis; glycine from L-serine: step 1/1. Functionally, catalyzes the reversible interconversion of serine and glycine with tetrahydrofolate (THF) serving as the one-carbon carrier. This reaction serves as the major source of one-carbon groups required for the biosynthesis of purines, thymidylate, methionine, and other important biomolecules. Also exhibits THF-independent aldolase activity toward beta-hydroxyamino acids, producing glycine and aldehydes, via a retro-aldol mechanism. This Chlamydia trachomatis serovar A (strain ATCC VR-571B / DSM 19440 / HAR-13) protein is Serine hydroxymethyltransferase.